Consider the following 1289-residue polypeptide: DNA-directed RNA polymerase subunit beta (1289 aa).

Belongs to the RNA polymerase beta chain family. The RNAP catalytic core consists of 2 alpha, 1 beta, 1 beta' and 1 omega subunit. When a sigma factor is associated with the core the holoenzyme is formed, which can initiate transcription.

The enzyme catalyses RNA(n) + a ribonucleoside 5'-triphosphate = RNA(n+1) + diphosphate. Functionally, DNA-dependent RNA polymerase catalyzes the transcription of DNA into RNA using the four ribonucleoside triphosphates as substrates. The chain is DNA-directed RNA polymerase subunit beta from Methylacidiphilum infernorum (isolate V4) (Methylokorus infernorum (strain V4)).